Consider the following 268-residue polypeptide: Octanoyltransferase (268 aa).

The region spanning 47–243 is the BPL/LPL catalytic domain; that stretch reads PETPDQVWLV…ALCEVLAAHE (197 aa). Residues 87–94, 159–161, and 172–174 contribute to the substrate site; these read RGGQITYH, ALG, and GVS. Cysteine 190 functions as the Acyl-thioester intermediate in the catalytic mechanism.

This sequence belongs to the LipB family.

It localises to the cytoplasm. It carries out the reaction octanoyl-[ACP] + L-lysyl-[protein] = N(6)-octanoyl-L-lysyl-[protein] + holo-[ACP] + H(+). It participates in protein modification; protein lipoylation via endogenous pathway; protein N(6)-(lipoyl)lysine from octanoyl-[acyl-carrier-protein]: step 1/2. In terms of biological role, catalyzes the transfer of endogenously produced octanoic acid from octanoyl-acyl-carrier-protein onto the lipoyl domains of lipoate-dependent enzymes. Lipoyl-ACP can also act as a substrate although octanoyl-ACP is likely to be the physiological substrate. This chain is Octanoyltransferase, found in Cupriavidus necator (strain ATCC 17699 / DSM 428 / KCTC 22496 / NCIMB 10442 / H16 / Stanier 337) (Ralstonia eutropha).